The primary structure comprises 291 residues: ATP synthase gamma chain (291 aa).

The protein belongs to the ATPase gamma chain family. In terms of assembly, F-type ATPases have 2 components, CF(1) - the catalytic core - and CF(0) - the membrane proton channel. CF(1) has five subunits: alpha(3), beta(3), gamma(1), delta(1), epsilon(1). CF(0) has three main subunits: a, b and c.

The protein resides in the cell inner membrane. Its function is as follows. Produces ATP from ADP in the presence of a proton gradient across the membrane. The gamma chain is believed to be important in regulating ATPase activity and the flow of protons through the CF(0) complex. The polypeptide is ATP synthase gamma chain (Sulfurihydrogenibium sp. (strain YO3AOP1)).